The chain runs to 570 residues: Zinc finger protein 76 (570 aa).

Lysine 24 is covalently cross-linked (Glycyl lysine isopeptide (Lys-Gly) (interchain with G-Cter in SUMO2)). Repeat copies occupy residues 34 to 45, 62 to 73, and 88 to 99. A 3 X 12 AA approximate repeats region spans residues 34–99; it reads IQLEDGTTAY…LEDGSTAYIH (66 aa). 7 C2H2-type zinc fingers span residues 165 to 189, 195 to 219, 225 to 249, 255 to 279, 285 to 309, 315 to 339, and 345 to 368; these read FRCGYKGCGRLYTTAHHLKVHERAH, YRCDFPSCGKAFATGYGLKSHVRTH, YKCPEELCSKAFKTSGDLQKHVRTH, FQCPFEGCGRSFTTSNIRKVHVRTH, YTCPEPHCGRGFTSATNYKNHVRIH, YVCTVPGCGKRFTEYSSLYKHHVVH, and YTCSTCGKTYRQTSTLAMHKRSAH. Positions 365 to 401 are disordered; the sequence is RSAHGELEATEESEQALYEQQQLEAASAAEESPPPKR. Residues 379-395 show a composition bias toward low complexity; the sequence is QALYEQQQLEAASAAEE.

Belongs to the krueppel C2H2-type zinc-finger protein family. In terms of tissue distribution, testis.

Its subcellular location is the nucleus. Its function is as follows. May be involved in transcriptional regulation. This chain is Zinc finger protein 76 (ZNF76), found in Homo sapiens (Human).